Here is a 326-residue protein sequence, read N- to C-terminus: Biotin synthase (326 aa).

Positions 42 to 266 (NEIQLAALLN…LMPKSYVRLA (225 aa)) constitute a Radical SAM core domain. [4Fe-4S] cluster is bound by residues Cys57, Cys61, and Cys64. Positions 101, 132, 192, and 264 each coordinate [2Fe-2S] cluster.

Belongs to the radical SAM superfamily. Biotin synthase family. In terms of assembly, homodimer. [4Fe-4S] cluster is required as a cofactor. It depends on [2Fe-2S] cluster as a cofactor.

The enzyme catalyses (4R,5S)-dethiobiotin + (sulfur carrier)-SH + 2 reduced [2Fe-2S]-[ferredoxin] + 2 S-adenosyl-L-methionine = (sulfur carrier)-H + biotin + 2 5'-deoxyadenosine + 2 L-methionine + 2 oxidized [2Fe-2S]-[ferredoxin]. The protein operates within cofactor biosynthesis; biotin biosynthesis; biotin from 7,8-diaminononanoate: step 2/2. Its function is as follows. Catalyzes the conversion of dethiobiotin (DTB) to biotin by the insertion of a sulfur atom into dethiobiotin via a radical-based mechanism. This Ehrlichia chaffeensis (strain ATCC CRL-10679 / Arkansas) protein is Biotin synthase.